A 428-amino-acid polypeptide reads, in one-letter code: Serine--tRNA ligase (428 aa).

231–233 is a binding site for L-serine; that stretch reads TAE. 262-264 is a binding site for ATP; sequence RAE. E285 lines the L-serine pocket. 349-352 provides a ligand contact to ATP; that stretch reads EISS. S385 contacts L-serine.

Belongs to the class-II aminoacyl-tRNA synthetase family. Type-1 seryl-tRNA synthetase subfamily. As to quaternary structure, homodimer. The tRNA molecule binds across the dimer.

It localises to the cytoplasm. The catalysed reaction is tRNA(Ser) + L-serine + ATP = L-seryl-tRNA(Ser) + AMP + diphosphate + H(+). The enzyme catalyses tRNA(Sec) + L-serine + ATP = L-seryl-tRNA(Sec) + AMP + diphosphate + H(+). The protein operates within aminoacyl-tRNA biosynthesis; selenocysteinyl-tRNA(Sec) biosynthesis; L-seryl-tRNA(Sec) from L-serine and tRNA(Sec): step 1/1. Its function is as follows. Catalyzes the attachment of serine to tRNA(Ser). Is also able to aminoacylate tRNA(Sec) with serine, to form the misacylated tRNA L-seryl-tRNA(Sec), which will be further converted into selenocysteinyl-tRNA(Sec). This chain is Serine--tRNA ligase, found in Methylorubrum extorquens (strain CM4 / NCIMB 13688) (Methylobacterium extorquens).